The sequence spans 636 residues: Fructose-1,6-bisphosphatase class 3 (636 aa).

The protein belongs to the FBPase class 3 family. The cofactor is Mn(2+).

It catalyses the reaction beta-D-fructose 1,6-bisphosphate + H2O = beta-D-fructose 6-phosphate + phosphate. The protein operates within carbohydrate biosynthesis; gluconeogenesis. This chain is Fructose-1,6-bisphosphatase class 3, found in Streptococcus gordonii (strain Challis / ATCC 35105 / BCRC 15272 / CH1 / DL1 / V288).